A 477-amino-acid polypeptide reads, in one-letter code: Adenylyl cyclase-associated protein 2 (477 aa).

N-acetylalanine is present on Ala-2. Disordered regions lie at residues 224 to 261 (VLSSGPGLPPPPPPPPPPGPPPLLENEGKKEESSPSRS) and 274 to 323 (TKGL…KHAP). Residues 230 to 246 (GLPPPPPPPPPPGPPPL) show a composition bias toward pro residues. A phosphoserine mark is found at Ser-301 and Ser-309. The segment covering 301 to 320 (SPTKSHTPSPTSPKSYPSQK) has biased composition (low complexity). Positions 317 to 455 (PSQKHAPVLE…QDGDYREFPI (139 aa)) constitute a C-CAP/cofactor C-like domain.

The protein belongs to the CAP family.

The protein localises to the cell membrane. In terms of biological role, involved in the regulation of actin polymerization. This is Adenylyl cyclase-associated protein 2 (CAP2) from Pongo abelii (Sumatran orangutan).